The sequence spans 358 residues: Aromatic amino acid aminotransferase (358 aa).

N6-(pyridoxal phosphate)lysine is present on Lys222.

The protein belongs to the class-II pyridoxal-phosphate-dependent aminotransferase family. In terms of assembly, homodimer. Pyridoxal 5'-phosphate serves as cofactor.

The catalysed reaction is an aromatic L-alpha-amino acid + 2-oxoglutarate = an aromatic oxo-acid + L-glutamate. Functionally, aminotransferase that catalyzes the conversion of aromatic amino acids and 2-oxoglutarate into corresponding aromatic oxo acids and L-glutamate. This is Aromatic amino acid aminotransferase from Mycobacterium sp. (strain KMS).